The primary structure comprises 94 residues: Acylphosphatase (94 aa).

The 88-residue stretch at 7–94 (AALVRITGRV…EAPAGFRITR (88 aa)) folds into the Acylphosphatase-like domain. Active-site residues include R22 and N40.

This sequence belongs to the acylphosphatase family.

It carries out the reaction an acyl phosphate + H2O = a carboxylate + phosphate + H(+). The polypeptide is Acylphosphatase (acyP) (Sinorhizobium medicae (strain WSM419) (Ensifer medicae)).